An 859-amino-acid polypeptide reads, in one-letter code: Envelope glycoprotein (859 aa).

The propeptide occupies Met-1–Phe-6. Over Tyr-7–Trp-614 the chain is Extracellular. N-linked (GlcNAc...) asparagine; by host glycans are attached at residues Asn-40, Asn-112, Asn-141, Asn-148, Asn-186, Asn-214, Asn-233, Asn-244, Asn-340, Asn-368, Asn-399, Asn-406, and Asn-411. The tract at residues Phe-446–Thr-466 is fusion peptide. N-linked (GlcNAc...) asparagine; by host glycans are attached at residues Asn-483 and Asn-490. The tract at residues Leu-498–Thr-513 is immunosuppression. Residues Asn-550 and Asn-557 are each glycosylated (N-linked (GlcNAc...) asparagine; by host). Coiled-coil stretches lie at residues Ile-576–Lys-624 and Lys-663–Gln-699. The chain crosses the membrane as a helical span at residues Ile-615 to Leu-635. Topologically, residues Leu-636 to Val-859 are cytoplasmic.

The mature envelope protein (Env) consists of a trimer of SU-TM heterodimers attached by noncovalent interactions or by a labile interchain disulfide bond. In terms of processing, specific enzymatic cleavages in vivo yield mature proteins. Envelope glycoproteins are synthesized as an inactive precursor that is N-glycosylated and processed likely by host cell furin or by a furin-like protease in the Golgi to yield the mature SU and TM proteins. The cleavage site between SU and TM requires the minimal sequence [KR]-X-[KR]-R.

It is found in the virion membrane. The protein localises to the host cell membrane. The surface protein (SU) attaches the virus to the host cell by binding to its receptor. This interaction triggers the refolding of the transmembrane protein (TM) and is thought to activate its fusogenic potential by unmasking its fusion peptide. Fusion occurs at the host cell plasma membrane. Functionally, the transmembrane protein (TM) acts as a class I viral fusion protein. Under the current model, the protein has at least 3 conformational states: pre-fusion native state, pre-hairpin intermediate state, and post-fusion hairpin state. During viral and target cell membrane fusion, the coiled coil regions (heptad repeats) assume a trimer-of-hairpins structure, positioning the fusion peptide in close proximity to the C-terminal region of the ectodomain. The formation of this structure appears to drive apposition and subsequent fusion of viral and target cell membranes. Membranes fusion leads to delivery of the nucleocapsid into the cytoplasm. In Equus asinus (Donkey), this protein is Envelope glycoprotein (env).